Here is a 109-residue protein sequence, read N- to C-terminus: Meiotically up-regulated gene 153 protein (109 aa).

The protein localises to the mitochondrion. Its function is as follows. Has a role in meiosis. The protein is Meiotically up-regulated gene 153 protein (mug153) of Schizosaccharomyces pombe (strain 972 / ATCC 24843) (Fission yeast).